Consider the following 180-residue polypeptide: ATP synthase subunit delta (180 aa).

Belongs to the ATPase delta chain family. In terms of assembly, F-type ATPases have 2 components, F(1) - the catalytic core - and F(0) - the membrane proton channel. F(1) has five subunits: alpha(3), beta(3), gamma(1), delta(1), epsilon(1). F(0) has three main subunits: a(1), b(2) and c(10-14). The alpha and beta chains form an alternating ring which encloses part of the gamma chain. F(1) is attached to F(0) by a central stalk formed by the gamma and epsilon chains, while a peripheral stalk is formed by the delta and b chains.

It is found in the cell inner membrane. Its function is as follows. F(1)F(0) ATP synthase produces ATP from ADP in the presence of a proton or sodium gradient. F-type ATPases consist of two structural domains, F(1) containing the extramembraneous catalytic core and F(0) containing the membrane proton channel, linked together by a central stalk and a peripheral stalk. During catalysis, ATP synthesis in the catalytic domain of F(1) is coupled via a rotary mechanism of the central stalk subunits to proton translocation. In terms of biological role, this protein is part of the stalk that links CF(0) to CF(1). It either transmits conformational changes from CF(0) to CF(1) or is implicated in proton conduction. This chain is ATP synthase subunit delta, found in Acidovorax sp. (strain JS42).